A 232-amino-acid polypeptide reads, in one-letter code: Orotidine 5'-phosphate decarboxylase (232 aa).

Residues Asp-13, Lys-35, Asp-62 to Thr-71, Thr-122, Arg-182, Gln-191, Gly-211, and Arg-212 each bind substrate. Lys-64 serves as the catalytic Proton donor.

The protein belongs to the OMP decarboxylase family. Type 1 subfamily. As to quaternary structure, homodimer.

The catalysed reaction is orotidine 5'-phosphate + H(+) = UMP + CO2. The protein operates within pyrimidine metabolism; UMP biosynthesis via de novo pathway; UMP from orotate: step 2/2. Its function is as follows. Catalyzes the decarboxylation of orotidine 5'-monophosphate (OMP) to uridine 5'-monophosphate (UMP). This is Orotidine 5'-phosphate decarboxylase from Pseudomonas aeruginosa (strain LESB58).